A 423-amino-acid chain; its full sequence is Sulfate adenylyltransferase (423 aa).

This sequence belongs to the sulfate adenylyltransferase family.

It catalyses the reaction sulfate + ATP + H(+) = adenosine 5'-phosphosulfate + diphosphate. Its pathway is sulfur metabolism; hydrogen sulfide biosynthesis; sulfite from sulfate: step 1/3. This chain is Sulfate adenylyltransferase, found in Desulfovibrio desulfuricans (strain ATCC 27774 / DSM 6949 / MB).